The chain runs to 147 residues: Large ribosomal subunit protein bL9 (147 aa).

It belongs to the bacterial ribosomal protein bL9 family.

Binds to the 23S rRNA. This chain is Large ribosomal subunit protein bL9, found in Thermoanaerobacter pseudethanolicus (strain ATCC 33223 / 39E) (Clostridium thermohydrosulfuricum).